Reading from the N-terminus, the 199-residue chain is Imidazoleglycerol-phosphate dehydratase (199 aa).

It belongs to the imidazoleglycerol-phosphate dehydratase family.

Its subcellular location is the cytoplasm. The enzyme catalyses D-erythro-1-(imidazol-4-yl)glycerol 3-phosphate = 3-(imidazol-4-yl)-2-oxopropyl phosphate + H2O. It participates in amino-acid biosynthesis; L-histidine biosynthesis; L-histidine from 5-phospho-alpha-D-ribose 1-diphosphate: step 6/9. The sequence is that of Imidazoleglycerol-phosphate dehydratase from Acidithiobacillus ferrooxidans (strain ATCC 53993 / BNL-5-31) (Leptospirillum ferrooxidans (ATCC 53993)).